Consider the following 119-residue polypeptide: Large ribosomal subunit protein bL17 (119 aa).

The protein belongs to the bacterial ribosomal protein bL17 family. In terms of assembly, part of the 50S ribosomal subunit. Contacts protein L32.

This is Large ribosomal subunit protein bL17 from Acholeplasma laidlawii (strain PG-8A).